A 152-amino-acid polypeptide reads, in one-letter code: Protein Turandot X (152 aa).

Positions 1–22 (MGFYISSLLICVFLGIVRFASA) are cleaved as a signal peptide.

The protein belongs to the Turandot family.

The protein resides in the secreted. A humoral factor that may play a role in stress tolerance. This is Protein Turandot X from Drosophila erecta (Fruit fly).